A 560-amino-acid chain; its full sequence is IQ motif and ankyrin repeat domain-containing protein 1 (560 aa).

Positions 1–72 (MDSKKGRPKA…DRAARAIQGA (72 aa)) are disordered. The region spanning 62–91 (EDRAARAIQGAFRQLRARRELARRREERRE) is the IQ domain. 2 ANK repeats span residues 191-223 (YGNTPLSEAAAGGQPLAIQLRAELGASPNSKGA) and 224-253 (FGPTPLYRAAFGGHLAAVEVLLKLGADPRV). The stretch at 281–398 (LTEAMLQNME…RLELREQTQE (118 aa)) forms a coiled coil.

The polypeptide is IQ motif and ankyrin repeat domain-containing protein 1 (Homo sapiens (Human)).